The following is a 337-amino-acid chain: Heat-inducible transcription repressor HrcA (337 aa).

This sequence belongs to the HrcA family.

Its function is as follows. Negative regulator of class I heat shock genes (grpE-dnaK-dnaJ and groELS operons). Prevents heat-shock induction of these operons. The sequence is that of Heat-inducible transcription repressor HrcA from Polaromonas naphthalenivorans (strain CJ2).